The sequence spans 449 residues: Adenylosuccinate synthetase (449 aa).

GTP contacts are provided by residues 12 to 18 (GDEGKGK) and 40 to 42 (GHT). Aspartate 13 (proton acceptor) is an active-site residue. The Mg(2+) site is built by aspartate 13 and glycine 40. IMP contacts are provided by residues 13-16 (DEGK), 38-41 (NAGH), threonine 128, arginine 142, glutamine 223, threonine 238, and arginine 302. The active-site Proton donor is histidine 41. 298–304 (TTTGRRR) lines the substrate pocket. Residues arginine 304, 330–332 (KLD), and 412–414 (SLG) contribute to the GTP site.

It belongs to the adenylosuccinate synthetase family. Homodimer. Mg(2+) is required as a cofactor.

The protein resides in the cytoplasm. It carries out the reaction IMP + L-aspartate + GTP = N(6)-(1,2-dicarboxyethyl)-AMP + GDP + phosphate + 2 H(+). It functions in the pathway purine metabolism; AMP biosynthesis via de novo pathway; AMP from IMP: step 1/2. Functionally, plays an important role in the de novo pathway of purine nucleotide biosynthesis. Catalyzes the first committed step in the biosynthesis of AMP from IMP. This Gloeothece citriformis (strain PCC 7424) (Cyanothece sp. (strain PCC 7424)) protein is Adenylosuccinate synthetase.